Consider the following 364-residue polypeptide: Monocarboxylate 2-oxoacid-binding periplasmic protein all3028 (364 aa).

The N-terminal stretch at 1-26 (MKRREVLNTAAIATATTALVSCTQTN) is a signal peptide. Residues 103–104 (YY), Q160, and R181 each bind substrate. Q160 lines the Na(+) pocket. 3 residues coordinate Na(+): E218, W219, and E244.

The protein belongs to the bacterial solute-binding protein 7 family. In terms of assembly, homodimer. The complex comprises the extracytoplasmic solute receptor protein all3028, and the two putative transmembrane proteins alr3026 and alr3027.

It localises to the periplasm. Its activity is regulated as follows. Pyruvate uptake inhibited by 2-oxobutyrate, 2-oxovalerate, 2-oxoisovalerate, 2-oxoisocaproate and 2-oxo-3-methylvalerate. Its function is as follows. Part of the tripartite ATP-independent periplasmic (TRAP) transport system involved in the uptake of monocarboxylate 2-oxoacids. This protein specifically binds monocarboxylate 2-oxoacids including pyruvate, 2-oxobutyrate, 2-oxovalerate, 2-oxoisovalerate, 2-oxoisocaproate and 2-oxo-3-methylvalerate. Is not able to bind mannitol. In Nostoc sp. (strain PCC 7120 / SAG 25.82 / UTEX 2576), this protein is Monocarboxylate 2-oxoacid-binding periplasmic protein all3028.